Consider the following 197-residue polypeptide: FMN-dependent NADH:quinone oxidoreductase (197 aa).

FMN is bound by residues serine 10, 16-18, 93-96, and 137-140; these read SQS, MYNF, and TRGG.

Belongs to the azoreductase type 1 family. In terms of assembly, homodimer. The cofactor is FMN.

It carries out the reaction 2 a quinone + NADH + H(+) = 2 a 1,4-benzosemiquinone + NAD(+). The catalysed reaction is N,N-dimethyl-1,4-phenylenediamine + anthranilate + 2 NAD(+) = 2-(4-dimethylaminophenyl)diazenylbenzoate + 2 NADH + 2 H(+). In terms of biological role, quinone reductase that provides resistance to thiol-specific stress caused by electrophilic quinones. Functionally, also exhibits azoreductase activity. Catalyzes the reductive cleavage of the azo bond in aromatic azo compounds to the corresponding amines. The protein is FMN-dependent NADH:quinone oxidoreductase of Shewanella loihica (strain ATCC BAA-1088 / PV-4).